Here is a 126-residue protein sequence, read N- to C-terminus: Aspartate 1-decarboxylase (126 aa).

Catalysis depends on serine 25, which acts as the Schiff-base intermediate with substrate; via pyruvic acid. Serine 25 is subject to Pyruvic acid (Ser). Threonine 57 contacts substrate. Tyrosine 58 serves as the catalytic Proton donor. Glycine 73–alanine 75 is a binding site for substrate.

This sequence belongs to the PanD family. In terms of assembly, heterooctamer of four alpha and four beta subunits. Pyruvate is required as a cofactor. In terms of processing, is synthesized initially as an inactive proenzyme, which is activated by self-cleavage at a specific serine bond to produce a beta-subunit with a hydroxyl group at its C-terminus and an alpha-subunit with a pyruvoyl group at its N-terminus.

The protein localises to the cytoplasm. It catalyses the reaction L-aspartate + H(+) = beta-alanine + CO2. Its pathway is cofactor biosynthesis; (R)-pantothenate biosynthesis; beta-alanine from L-aspartate: step 1/1. Catalyzes the pyruvoyl-dependent decarboxylation of aspartate to produce beta-alanine. The protein is Aspartate 1-decarboxylase of Marinomonas sp. (strain MWYL1).